We begin with the raw amino-acid sequence, 236 residues long: 7-cyano-7-deazaguanine synthase (236 aa).

Position 13 to 23 (13 to 23 (FSGGQDSTVCL)) interacts with ATP. Positions 200, 215, 218, and 221 each coordinate Zn(2+).

Belongs to the QueC family. Zn(2+) serves as cofactor.

The enzyme catalyses 7-carboxy-7-deazaguanine + NH4(+) + ATP = 7-cyano-7-deazaguanine + ADP + phosphate + H2O + H(+). It functions in the pathway purine metabolism; 7-cyano-7-deazaguanine biosynthesis. Its function is as follows. Catalyzes the ATP-dependent conversion of 7-carboxy-7-deazaguanine (CDG) to 7-cyano-7-deazaguanine (preQ(0)). In Parvibaculum lavamentivorans (strain DS-1 / DSM 13023 / NCIMB 13966), this protein is 7-cyano-7-deazaguanine synthase.